The primary structure comprises 401 residues: L-rhamnonate dehydratase (401 aa).

H29 and R55 together coordinate substrate. D222, E248, and E276 together coordinate Mg(2+). H325 (proton acceptor) is an active-site residue. E345 contacts substrate.

The protein belongs to the mandelate racemase/muconate lactonizing enzyme family. RhamD subfamily. As to quaternary structure, homooctamer; tetramer of dimers. Mg(2+) serves as cofactor.

It carries out the reaction L-rhamnonate = 2-dehydro-3-deoxy-L-rhamnonate + H2O. In terms of biological role, catalyzes the dehydration of L-rhamnonate to 2-keto-3-deoxy-L-rhamnonate (KDR). The sequence is that of L-rhamnonate dehydratase from Klebsiella pneumoniae subsp. pneumoniae (strain ATCC 700721 / MGH 78578).